The following is a 151-amino-acid chain: Ribosome maturation factor RimP (151 aa).

It belongs to the RimP family.

It localises to the cytoplasm. Its function is as follows. Required for maturation of 30S ribosomal subunits. The sequence is that of Ribosome maturation factor RimP from Nitrosococcus oceani (strain ATCC 19707 / BCRC 17464 / JCM 30415 / NCIMB 11848 / C-107).